Here is a 1241-residue protein sequence, read N- to C-terminus: Interphotoreceptor matrix proteoglycan 2 (1241 aa).

Positions 1-22 (MIMFPLFGKISLGILIFVLIEG) are cleaved as a signal peptide. The Extracellular portion of the chain corresponds to 23-1099 (DFPSLTAQTY…KHCEEFVSEP (1077 aa)). Asn154 carries N-linked (GlcNAc...) asparagine glycosylation. The tract at residues 180 to 223 (ELSSPVPVGDTSTLGDTTLSVPHPEVDAYEGASESSLERPEESI) is disordered. Residues 189–199 (DTSTLGDTTLS) are compositionally biased toward polar residues. 2 O-linked (GalNAc...) threonine glycosylation sites follow: Thr190 and Thr192. The SEA 1 domain maps to 239-353 (GEQIAEFSIH…KPTVVYTISN (115 aa)). The hyaluronan-binding motif involved in chondroitin sulfate A-binding stretch occupies residues 259–267 (QDSSSFHHQ). 3 N-linked (GlcNAc...) asparagine glycosylation sites follow: Asn301, Asn320, and Asn370. Thr544 and Thr556 each carry an O-linked (GalNAc...) threonine glycan. Positions 660-678 (QISKHSKYEHDDRSTHFPE) are enriched in basic and acidic residues. Residues 660 to 684 (QISKHSKYEHDDRSTHFPEEEPLSG) form a disordered region. Residues 897–1010 (GALVVFFSLR…YSLDVESGDE (114 aa)) enclose the SEA 2 domain. N-linked (GlcNAc...) asparagine glycans are attached at residues Asn942 and Asn956. EGF-like domains lie at 1010–1051 (EANP…RPCQ) and 1052–1093 (SLCD…KHCE). 6 cysteine pairs are disulfide-bonded: Cys1014–Cys1025, Cys1019–Cys1036, Cys1038–Cys1050, Cys1054–Cys1067, Cys1061–Cys1077, and Cys1079–Cys1092. A hyaluronan-binding motif involved in chondroitin sulfate C-binding region spans residues 1080–1088 (RVGENWWYR). A helical membrane pass occupies residues 1100 to 1120 (VIIGITIASVVGLLVIFSAII). Topologically, residues 1121–1241 (YFFIRTLQAH…FVREQQVEEV (121 aa)) are cytoplasmic. A hyaluronan-binding motif involved in chondroitin sulfate A- and C-binding region spans residues 1125–1133 (RTLQAHHDR). Residues 1136-1145 (RESPFSGSSR) are hyaluronan-binding motif involved in chondroitin sulfate C-binding. The tract at residues 1210–1218 (REEIQERMR) is hyaluronan-binding motif involved in chondroitin sulfate A- and C-binding motif.

In terms of processing, highly glycosylated (N- and O-linked carbohydrates). As to expression, expressed in the retina (at protein level). Expressed by photoreceptors of the interphotoreceptor matrix (IPM) surrounding both rods and cones (at protein level). IPM occupies the subretinal space between the apices of the retinal pigment epithelium and the neural retina. Expressed in the pineal gland (at protein level).

The protein localises to the photoreceptor outer segment membrane. It is found in the photoreceptor inner segment membrane. Its subcellular location is the secreted. The protein resides in the extracellular space. It localises to the extracellular matrix. The protein localises to the interphotoreceptor matrix. Chondroitin sulfate- and hyaluronan-binding proteoglycan involved in the organization of interphotoreceptor matrix; may participate in the maturation and maintenance of the light-sensitive photoreceptor outer segment. Binds heparin. The polypeptide is Interphotoreceptor matrix proteoglycan 2 (IMPG2) (Homo sapiens (Human)).